The primary structure comprises 244 residues: tRNA (guanine-N(1)-)-methyltransferase (244 aa).

Residues G113 and 133–138 (IGDFVL) each bind S-adenosyl-L-methionine.

The protein belongs to the RNA methyltransferase TrmD family. Homodimer.

The protein localises to the cytoplasm. It carries out the reaction guanosine(37) in tRNA + S-adenosyl-L-methionine = N(1)-methylguanosine(37) in tRNA + S-adenosyl-L-homocysteine + H(+). Its function is as follows. Specifically methylates guanosine-37 in various tRNAs. In Bacillus pumilus (strain SAFR-032), this protein is tRNA (guanine-N(1)-)-methyltransferase.